Reading from the N-terminus, the 636-residue chain is Carbon monoxide dehydrogenase 1 (636 aa).

[4Fe-4S] cluster contacts are provided by cysteine 38, cysteine 46, cysteine 47, cysteine 50, cysteine 55, and cysteine 69. Positions 262, 297, 335, 448, 478, and 528 each coordinate [Ni-4Fe-5S] cluster.

It belongs to the Ni-containing carbon monoxide dehydrogenase family. In terms of assembly, homodimer. [4Fe-4S] cluster serves as cofactor. It depends on [Ni-4Fe-5S] cluster as a cofactor.

The protein resides in the cytoplasm. It localises to the cell membrane. The catalysed reaction is CO + 2 oxidized [2Fe-2S]-[ferredoxin] + H2O = 2 reduced [2Fe-2S]-[ferredoxin] + CO2 + 2 H(+). Its activity is regulated as follows. Inactivated by O(2). Functionally, CODH oxidizes carbon monoxide coupled, via CooF, to the reduction of a hydrogen cation by a hydrogenase (possibly CooH). This chain is Carbon monoxide dehydrogenase 1 (cooS1), found in Carboxydothermus hydrogenoformans (strain ATCC BAA-161 / DSM 6008 / Z-2901).